Consider the following 190-residue polypeptide: Selenoprotein S (190 aa).

Residues M1 to D13 are compositionally biased toward basic and acidic residues. Residues M1–D20 form a disordered region. The chain crosses the membrane as a helical span at residues A30 to I50. Low complexity predominate over residues S58–S68. The tract at residues S58–G190 is disordered. A compositionally biased stretch (basic and acidic residues) spans R79–M120. Residues V136–R151 show a composition bias toward polar residues. Residue U189 is a non-standard amino acid, selenocysteine.

The protein belongs to the selenoprotein S family.

It is found in the endoplasmic reticulum membrane. Its subcellular location is the cytoplasm. Its function is as follows. Involved in the degradation process of misfolded endoplasmic reticulum (ER) luminal proteins. Participates in the transfer of misfolded proteins from the ER to the cytosol, where they are destroyed by the proteasome in a ubiquitin-dependent manner. The polypeptide is Selenoprotein S (vimp) (Danio rerio (Zebrafish)).